Consider the following 453-residue polypeptide: Homogentisate 1,2-dioxygenase (453 aa).

Catalysis depends on His306, which acts as the Proton acceptor. The Fe cation site is built by His349 and Glu355. Homogentisate is bound by residues Tyr364 and His385. His385 provides a ligand contact to Fe cation.

Belongs to the homogentisate dioxygenase family. Hexamer; dimer of trimers. Requires Fe cation as cofactor.

The enzyme catalyses homogentisate + O2 = 4-maleylacetoacetate + H(+). It functions in the pathway amino-acid degradation; L-phenylalanine degradation; acetoacetate and fumarate from L-phenylalanine: step 4/6. In terms of biological role, involved in the catabolism of homogentisate (2,5-dihydroxyphenylacetate or 2,5-OH-PhAc), a central intermediate in the degradation of phenylalanine and tyrosine. Catalyzes the oxidative ring cleavage of the aromatic ring of homogentisate to yield maleylacetoacetate. This chain is Homogentisate 1,2-dioxygenase, found in Rhizobium johnstonii (strain DSM 114642 / LMG 32736 / 3841) (Rhizobium leguminosarum bv. viciae).